A 61-amino-acid chain; its full sequence is Large ribosomal subunit protein uL30 (61 aa).

It belongs to the universal ribosomal protein uL30 family. As to quaternary structure, part of the 50S ribosomal subunit.

This chain is Large ribosomal subunit protein uL30, found in Frankia casuarinae (strain DSM 45818 / CECT 9043 / HFP020203 / CcI3).